We begin with the raw amino-acid sequence, 354 residues long: Soluble interferon alpha/beta receptor OPG204 (354 aa).

An N-terminal signal peptide occupies residues 1–22 (MMKMTMKMMVHIYFVSLLLLLF). Ig-like C2-type domains lie at 68–150 (IGEP…RSHV) and 158–240 (PEIY…IVVS). Intrachain disulfides connect cysteine 76–cysteine 132 and cysteine 175–cysteine 224. N-linked (GlcNAc...) asparagine; by host glycans are attached at residues asparagine 120, asparagine 124, asparagine 185, asparagine 272, and asparagine 324. An Ig-like V-type domain is found at 249–348 (PSQDHRFKLI…HNYYFEKTLT (100 aa)). A disulfide bridge links cysteine 275 with cysteine 336.

The protein belongs to the interleukin-1 receptor family. Interacts with host IFNA1.

The protein localises to the secreted. Counteracts the antiviral effects of host IFN-alpha/beta and key IFN-inducible proteins involved in viral RNA degradation suxh as host OAS1. Acts as a soluble IFN-alpha receptor and thus inhibits the interaction between host IFN-alpha and its receptor. This Homo sapiens (Human) protein is Soluble interferon alpha/beta receptor OPG204 (OPG204).